The primary structure comprises 379 residues: Protein COS2 (379 aa).

Topologically, residues 1 to 72 are cytoplasmic; it reads MKENELKNEK…WKLSNNCIYP (72 aa). Residues 73-93 traverse the membrane as a helical segment; that stretch reads LIVSLLVLFLGPIFVLVICGL. Topologically, residues 94-254 are extracellular; it reads SRKRSLSKQL…FLCCIYVSRG (161 aa). The chain crosses the membrane as a helical span at residues 255 to 275; it reads MCLLLRTLYLGWILFMLVQGF. The Cytoplasmic portion of the chain corresponds to 276 to 379; that stretch reads QNIRVLIMSM…QLSRSEVLLV (104 aa).

The protein belongs to the DUP/COS family.

The protein resides in the membrane. The chain is Protein COS2 (COS2) from Saccharomyces cerevisiae (strain ATCC 204508 / S288c) (Baker's yeast).